The following is a 149-amino-acid chain: Glycine cleavage system H protein (149 aa).

A Lipoyl-binding domain is found at 23–104 (LIWVGISNHA…PYGIWLFKIN (82 aa)). Lys-64 is modified (N6-lipoyllysine).

The protein belongs to the GcvH family. As to quaternary structure, the glycine cleavage system is composed of four proteins: P, T, L and H. (R)-lipoate is required as a cofactor.

Functionally, the glycine cleavage system catalyzes the degradation of glycine. The H protein shuttles the methylamine group of glycine from the P protein to the T protein. This chain is Glycine cleavage system H protein, found in Polynucleobacter necessarius subsp. necessarius (strain STIR1).